The following is a 443-amino-acid chain: Methyl-coenzyme M reductase II subunit beta (443 aa).

Tyr367 provides a ligand contact to coenzyme M. Gly369 is a binding site for coenzyme B.

This sequence belongs to the methyl-coenzyme M reductase beta subunit family. MCR is a hexamer of two alpha, two beta, and two gamma chains, forming a dimer of heterotrimers. Coenzyme F430 is required as a cofactor.

It carries out the reaction coenzyme B + methyl-coenzyme M = methane + coenzyme M-coenzyme B heterodisulfide. It functions in the pathway one-carbon metabolism; methyl-coenzyme M reduction; methane from methyl-coenzyme M: step 1/1. Component of the methyl-coenzyme M reductase (MCR) I that catalyzes the reductive cleavage of methyl-coenzyme M (CoM-S-CH3 or 2-(methylthio)ethanesulfonate) using coenzyme B (CoB or 7-mercaptoheptanoylthreonine phosphate) as reductant which results in the production of methane and the mixed heterodisulfide of CoB and CoM (CoM-S-S-CoB). This is the final step in methanogenesis. The sequence is that of Methyl-coenzyme M reductase II subunit beta (mrtB) from Methanothermus fervidus (strain ATCC 43054 / DSM 2088 / JCM 10308 / V24 S).